The following is a 460-amino-acid chain: Cysteine--tRNA ligase (460 aa).

A Zn(2+)-binding site is contributed by Cys27. Positions 29 to 39 (PTVYDLIHVGN) match the 'HIGH' region motif. Residues Cys207, His232, and Glu236 each coordinate Zn(2+). The 'KMSKS' region motif lies at 264 to 268 (KMSKS). Lys267 provides a ligand contact to ATP.

It belongs to the class-I aminoacyl-tRNA synthetase family. In terms of assembly, monomer. Zn(2+) is required as a cofactor.

Its subcellular location is the cytoplasm. The enzyme catalyses tRNA(Cys) + L-cysteine + ATP = L-cysteinyl-tRNA(Cys) + AMP + diphosphate. The chain is Cysteine--tRNA ligase (cysS) from Thermotoga maritima (strain ATCC 43589 / DSM 3109 / JCM 10099 / NBRC 100826 / MSB8).